Consider the following 119-residue polypeptide: Ribosome-binding factor A (119 aa).

The protein belongs to the RbfA family. Monomer. Binds 30S ribosomal subunits, but not 50S ribosomal subunits or 70S ribosomes.

The protein resides in the cytoplasm. Functionally, one of several proteins that assist in the late maturation steps of the functional core of the 30S ribosomal subunit. Associates with free 30S ribosomal subunits (but not with 30S subunits that are part of 70S ribosomes or polysomes). Required for efficient processing of 16S rRNA. May interact with the 5'-terminal helix region of 16S rRNA. The polypeptide is Ribosome-binding factor A (Pseudothermotoga lettingae (strain ATCC BAA-301 / DSM 14385 / NBRC 107922 / TMO) (Thermotoga lettingae)).